Consider the following 997-residue polypeptide: Phosphoenolpyruvate carboxylase (997 aa).

Positions 1–67 are disordered; that stretch reads MKSSGSARTA…KPAARTREDK (67 aa). Residues His-207 and Lys-649 contribute to the active site.

The protein belongs to the PEPCase type 1 family. Mg(2+) serves as cofactor.

It carries out the reaction oxaloacetate + phosphate = phosphoenolpyruvate + hydrogencarbonate. Its function is as follows. Forms oxaloacetate, a four-carbon dicarboxylic acid source for the tricarboxylic acid cycle. In Burkholderia vietnamiensis (strain G4 / LMG 22486) (Burkholderia cepacia (strain R1808)), this protein is Phosphoenolpyruvate carboxylase.